The primary structure comprises 689 residues: Translation initiation factor IF-2 (689 aa).

The interval 41–109 (DYERVFGGGN…EAPAAEEREA (69 aa)) is disordered. The segment covering 61-70 (RKGRQKKRRR) has biased composition (basic residues). Over residues 80–94 (RGPRAAAPSRPSRGR) the composition is skewed to low complexity. Over residues 96–109 (AAREEAPAAEEREA) the composition is skewed to basic and acidic residues. Residues 192 to 361 (EKPPVITVMG…LVVAELEELR (170 aa)) enclose the tr-type G domain. The interval 201 to 208 (GHVDHGKT) is G1. 201–208 (GHVDHGKT) is a binding site for GTP. The tract at residues 226 to 230 (GITQH) is G2. Residues 247 to 250 (DTPG) form a G3 region. Residues 247-251 (DTPGH) and 301-304 (NKID) each bind GTP. A G4 region spans residues 301–304 (NKID). Residues 337–339 (SAK) are G5.

This sequence belongs to the TRAFAC class translation factor GTPase superfamily. Classic translation factor GTPase family. IF-2 subfamily.

The protein localises to the cytoplasm. One of the essential components for the initiation of protein synthesis. Protects formylmethionyl-tRNA from spontaneous hydrolysis and promotes its binding to the 30S ribosomal subunits. Also involved in the hydrolysis of GTP during the formation of the 70S ribosomal complex. This is Translation initiation factor IF-2 from Rubrobacter xylanophilus (strain DSM 9941 / JCM 11954 / NBRC 16129 / PRD-1).